The sequence spans 224 residues: 3-dehydroquinate dehydratase (224 aa).

3-dehydroquinate contacts are provided by residues 30–32 (EWR) and R62. The active-site Proton donor/acceptor is the H118. The Schiff-base intermediate with substrate role is filled by K143. 3-dehydroquinate contacts are provided by R186, S205, and Q209.

It belongs to the type-I 3-dehydroquinase family. As to quaternary structure, homodimer.

It carries out the reaction 3-dehydroquinate = 3-dehydroshikimate + H2O. It functions in the pathway metabolic intermediate biosynthesis; chorismate biosynthesis; chorismate from D-erythrose 4-phosphate and phosphoenolpyruvate: step 3/7. Involved in the third step of the chorismate pathway, which leads to the biosynthesis of aromatic amino acids. Catalyzes the cis-dehydration of 3-dehydroquinate (DHQ) and introduces the first double bond of the aromatic ring to yield 3-dehydroshikimate. The polypeptide is 3-dehydroquinate dehydratase (Streptococcus suis (strain 98HAH33)).